The sequence spans 202 residues: Lymphotoxin-alpha (202 aa).

The signal sequence occupies residues Met-1–Gly-33. The region spanning Pro-60 to Leu-202 is the THD domain. A glycan (N-linked (GlcNAc...) asparagine) is linked at Asn-93.

It belongs to the tumor necrosis factor family. Homotrimer, and heterotrimer of either two LTB and one LTA subunits or (less prevalent) two LTA and one LTB subunits. Interacts with TNFRSF14.

It is found in the secreted. Its subcellular location is the membrane. Functionally, cytokine that in its homotrimeric form binds to TNFRSF1A/TNFR1, TNFRSF1B/TNFBR and TNFRSF14/HVEM. In its heterotrimeric form with LTB binds to TNFRSF3/LTBR. Lymphotoxin is produced by lymphocytes and is cytotoxic for a wide range of tumor cells in vitro and in vivo. The polypeptide is Lymphotoxin-alpha (Lta) (Rattus norvegicus (Rat)).